We begin with the raw amino-acid sequence, 636 residues long: DNA-directed RNA polymerase subunit gamma (636 aa).

Zn(2+) contacts are provided by cysteine 71, cysteine 73, cysteine 86, and cysteine 89. The Mg(2+) site is built by aspartate 467, aspartate 469, and aspartate 471.

This sequence belongs to the RNA polymerase beta' chain family. RpoC1 subfamily. As to quaternary structure, in cyanobacteria the RNAP catalytic core is composed of 2 alpha, 1 beta, 1 beta', 1 gamma and 1 omega subunit. When a sigma factor is associated with the core the holoenzyme is formed, which can initiate transcription. Mg(2+) serves as cofactor. Requires Zn(2+) as cofactor.

It carries out the reaction RNA(n) + a ribonucleoside 5'-triphosphate = RNA(n+1) + diphosphate. In terms of biological role, DNA-dependent RNA polymerase catalyzes the transcription of DNA into RNA using the four ribonucleoside triphosphates as substrates. The chain is DNA-directed RNA polymerase subunit gamma from Picosynechococcus sp. (strain ATCC 27264 / PCC 7002 / PR-6) (Agmenellum quadruplicatum).